The chain runs to 573 residues: FACT complex subunit pob3 (573 aa).

2 disordered regions span residues 153–174 (SDGD…KAAA) and 485–573 (LDND…KIGK). The segment covering 486–495 (DNDDMMSSDE) has biased composition (acidic residues). Over residues 496-505 (DGGRADRGSA) the composition is skewed to basic and acidic residues. Composition is skewed to acidic residues over residues 506 to 530 (DEDE…EFDS) and 541 to 562 (AEMD…SEEE).

Belongs to the SSRP1 family. Forms a stable heterodimer with spt16. The spt16-pob3 dimer weakly associates with multiple molecules of nhp6 to form the FACT complex.

It is found in the nucleus. Its subcellular location is the chromosome. In terms of biological role, component of the FACT complex, a general chromatin factor that acts to reorganize nucleosomes. The FACT complex is involved in multiple processes that require DNA as a template such as mRNA elongation, DNA replication and DNA repair. During transcription elongation the FACT complex acts as a histone chaperone that both destabilizes and restores nucleosomal structure. It facilitates the passage of RNA polymerase II and transcription by promoting the dissociation of one histone H2A-H2B dimer from the nucleosome, then subsequently promotes the reestablishment of the nucleosome following the passage of RNA polymerase II. This chain is FACT complex subunit pob3 (pob3), found in Aspergillus fumigatus (strain ATCC MYA-4609 / CBS 101355 / FGSC A1100 / Af293) (Neosartorya fumigata).